The primary structure comprises 351 residues: MESKQLLQKLLAGEHCSKEEMQDCMNSIMDGEFSDSVIAALLALLQKKGVVANELAGAHASLMAHATTVALSTHAVDTCGTGGDHGGTYNISTTASLIACSAGVRVAKHGNRSVTSSCGSADVLEALGFTLELPPEATISLFKKTGFAFLFAPLYHPSMKRVAHIRRELGIRTLFNMLGPLLNPAQVKRQLVGVFSEELSELYADVLLQTGARHALIVHASTEEGVILDEPSLNGTTFVTEIEKGVVRKHTLRPEEFGIAPAPLAALQGGDKEHNARIIQSIADGSASAAQRDAALYSSAMACYVGGKCACLNDGFIVAKEALESGKTQAKLKEIIAYNQALVTEYHVAKS.

5-phospho-alpha-D-ribose 1-diphosphate-binding positions include glycine 80, 83–84 (GD), threonine 88, 90–93 (NIST), 108–116 (KHGNRSVTS), and serine 120. Glycine 80 is an anthranilate binding site. Mg(2+) is bound at residue serine 92. Asparagine 111 is a binding site for anthranilate. Arginine 166 serves as a coordination point for anthranilate. Mg(2+) is bound by residues aspartate 229 and glutamate 230.

This sequence belongs to the anthranilate phosphoribosyltransferase family. As to quaternary structure, homodimer. Mg(2+) serves as cofactor.

It catalyses the reaction N-(5-phospho-beta-D-ribosyl)anthranilate + diphosphate = 5-phospho-alpha-D-ribose 1-diphosphate + anthranilate. Its pathway is amino-acid biosynthesis; L-tryptophan biosynthesis; L-tryptophan from chorismate: step 2/5. Functionally, catalyzes the transfer of the phosphoribosyl group of 5-phosphorylribose-1-pyrophosphate (PRPP) to anthranilate to yield N-(5'-phosphoribosyl)-anthranilate (PRA). The polypeptide is Anthranilate phosphoribosyltransferase (Chlorobium chlorochromatii (strain CaD3)).